The following is a 253-amino-acid chain: MLTRKQHELLLFIDRHLKQTGFSPSFDEMKDALNLRSKSGIHRLISALEERDFLRRRHHRARALEVLRLPETMPAATGKPPLAESGPPPVTAPATDESAAAESFVPNVIKGDFANRLAGASVATEAGAIHLPFYGRIAAGQPIEALRETGAQIEVPMNLLGHGEHYALEVAGDSMIEAGILDGDTVIIRRGDVAQNGQIVVALIDDQEVTLKRLRRRGSTIALEPANARYEPRIVPSDRVRIQGQLVGLLRRY.

The segment at residues 26 to 46 is a DNA-binding region (H-T-H motif); the sequence is FDEMKDALNLRSKSGIHRLIS. A disordered region spans residues 73 to 97; the sequence is MPAATGKPPLAESGPPPVTAPATDE. Catalysis depends on for autocatalytic cleavage activity residues Ser-174 and Lys-212.

The protein belongs to the peptidase S24 family. In terms of assembly, homodimer.

The enzyme catalyses Hydrolysis of Ala-|-Gly bond in repressor LexA.. Its function is as follows. Represses a number of genes involved in the response to DNA damage (SOS response), including recA and lexA. In the presence of single-stranded DNA, RecA interacts with LexA causing an autocatalytic cleavage which disrupts the DNA-binding part of LexA, leading to derepression of the SOS regulon and eventually DNA repair. The protein is LexA repressor of Gluconacetobacter diazotrophicus (strain ATCC 49037 / DSM 5601 / CCUG 37298 / CIP 103539 / LMG 7603 / PAl5).